A 429-amino-acid polypeptide reads, in one-letter code: Phosphoribosylamine--glycine ligase (429 aa).

The ATP-grasp domain occupies 109-316 (KDFLARHNIP…LVELCLAACE (208 aa)). ATP is bound at residue 135–196 (LREKGAPIVI…EEFLDGEEAS (62 aa)). A disordered region spans residues 212 to 237 (SQDHKRVGDKDTGPNTGGMGAYSPAP). Basic and acidic residues predominate over residues 213-223 (QDHKRVGDKDT). Mg(2+) contacts are provided by E286 and N288.

This sequence belongs to the GARS family. Monomer. It depends on Mg(2+) as a cofactor. Mn(2+) serves as cofactor.

It carries out the reaction 5-phospho-beta-D-ribosylamine + glycine + ATP = N(1)-(5-phospho-beta-D-ribosyl)glycinamide + ADP + phosphate + H(+). Its pathway is purine metabolism; IMP biosynthesis via de novo pathway; N(1)-(5-phospho-D-ribosyl)glycinamide from 5-phospho-alpha-D-ribose 1-diphosphate: step 2/2. The protein is Phosphoribosylamine--glycine ligase of Escherichia coli O157:H7.